The primary structure comprises 340 residues: GTPase Obg (340 aa).

In terms of domain architecture, Obg spans 1–159 (MGFIDEVKLC…KHVLLKLKVL (159 aa)). Positions 160–329 (SDVGIIGMPN…LSEKLKKSNS (170 aa)) constitute an OBG-type G domain. Residues 166 to 173 (GMPNAGKS), 191 to 195 (FTTVR), 212 to 215 (DIPG), 279 to 282 (NKCD), and 310 to 312 (NGD) contribute to the GTP site. 2 residues coordinate Mg(2+): Ser-173 and Thr-193.

Belongs to the TRAFAC class OBG-HflX-like GTPase superfamily. OBG GTPase family. As to quaternary structure, monomer. The cofactor is Mg(2+).

The protein localises to the cytoplasm. Its function is as follows. An essential GTPase which binds GTP, GDP and possibly (p)ppGpp with moderate affinity, with high nucleotide exchange rates and a fairly low GTP hydrolysis rate. Plays a role in control of the cell cycle, stress response, ribosome biogenesis and in those bacteria that undergo differentiation, in morphogenesis control. In Wolbachia sp. subsp. Drosophila simulans (strain wRi), this protein is GTPase Obg.